The primary structure comprises 408 residues: Imidazolonepropionase (408 aa).

Residues histidine 73 and histidine 75 each coordinate Fe(3+). 2 residues coordinate Zn(2+): histidine 73 and histidine 75. 3 residues coordinate 4-imidazolone-5-propanoate: arginine 82, tyrosine 145, and histidine 178. Tyrosine 145 contacts N-formimidoyl-L-glutamate. Histidine 243 serves as a coordination point for Fe(3+). Residue histidine 243 participates in Zn(2+) binding. A 4-imidazolone-5-propanoate-binding site is contributed by glutamine 246. Position 318 (aspartate 318) interacts with Fe(3+). Zn(2+) is bound at residue aspartate 318. Asparagine 320 and glycine 322 together coordinate N-formimidoyl-L-glutamate. Residue serine 323 coordinates 4-imidazolone-5-propanoate.

The protein belongs to the metallo-dependent hydrolases superfamily. HutI family. Zn(2+) serves as cofactor. The cofactor is Fe(3+).

The protein resides in the cytoplasm. The enzyme catalyses 4-imidazolone-5-propanoate + H2O = N-formimidoyl-L-glutamate. It participates in amino-acid degradation; L-histidine degradation into L-glutamate; N-formimidoyl-L-glutamate from L-histidine: step 3/3. In terms of biological role, catalyzes the hydrolytic cleavage of the carbon-nitrogen bond in imidazolone-5-propanoate to yield N-formimidoyl-L-glutamate. It is the third step in the universal histidine degradation pathway. The sequence is that of Imidazolonepropionase from Shewanella piezotolerans (strain WP3 / JCM 13877).